Consider the following 20-residue polypeptide: Punein (20 aa).

Residues Tyr-1 to Pro-20 form the Barwin domain.

Post-translationally, the N-terminus is blocked.

In Punica granatum (Pomegranate), this protein is Punein.